Consider the following 726-residue polypeptide: Ribonuclease R (726 aa).

The 329-residue stretch at 262–590 (RIDLRHLPFF…LVHRVIKNLL (329 aa)) folds into the RNB domain. Positions 642–723 (GDVLTGVISN…NERKIELSLY (82 aa)) constitute an S1 motif domain.

The protein belongs to the RNR ribonuclease family. RNase R subfamily. As to quaternary structure, monomer.

It is found in the cytoplasm. It catalyses the reaction Exonucleolytic cleavage in the 3'- to 5'-direction to yield nucleoside 5'-phosphates.. 3'-5' exoribonuclease that releases 5'-nucleoside monophosphates and is involved in maturation of structured RNAs. The protein is Ribonuclease R of Buchnera aphidicola subsp. Schizaphis graminum (strain Sg).